We begin with the raw amino-acid sequence, 224 residues long: Response regulator protein GraR (224 aa).

A Response regulatory domain is found at 2–115 (QILLVEDDNT…VLIAKLQAIY (114 aa)). At Asp-51 the chain carries 4-aspartylphosphate. Positions 126-224 (KRTLTWQDAI…KVGKGYMAHE (99 aa)) form a DNA-binding region, ompR/PhoB-type. Residues Thr-128, Thr-130, and Thr-149 each carry the phosphothreonine modification.

As to quaternary structure, interacts with GraX. Phosphorylated by GraS. Phosphorylated by Stk1; phosphorylation increases the DNA-binding activity of GraR.

The protein resides in the cytoplasm. Its function is as follows. Member of the two-component regulatory system GraR/GraS involved in resistance against cationic antimicrobial peptides (CAMPs). Upon phosphorylation by GraS, functions as a transcription regulator by direct binding to promoter regions of target genes such as adhesins, exoproteins, transporters, toxins, and proteins involved in cell wall synthesis. Down-regulates the expression of many genes involved in RNA and amino acid synthesis or glycolysis. In Staphylococcus aureus (strain bovine RF122 / ET3-1), this protein is Response regulator protein GraR (graR).